The sequence spans 709 residues: Leucine-rich repeat-containing protein 4B (709 aa).

Positions 1–38 (MAQAHIRGSPCPLLPPGRMSWPHGALLLLWLFSPPLRA) are cleaved as a signal peptide. Positions 50–88 (GGGSPPATSCPAACSCSNQASRVICTRRELAEVPASIPV) constitute an LRRNT domain. LRR repeat units follow at residues 89 to 110 (NTRY…TFKH), 113 to 134 (HLEI…AFNG), 137 to 158 (SLNT…AFEY), 161 to 182 (KLRE…AFNR), 185 to 207 (SLRR…AFEG), 210 to 231 (NLRY…TALV), 232 to 253 (RLEE…SFQG), 256 to 277 (SLRK…AFDD), and 280 to 301 (SLEE…LFTP). Asn226 carries N-linked (GlcNAc...) asparagine glycosylation. N-linked (GlcNAc...) asparagine glycosylation is found at Asn285, Asn335, Asn376, Asn402, Asn424, Asn427, Asn446, and Asn454. The LRRCT domain occupies 313–365 (NPWHCNCDVLWLSWWLKETVPSNTTCCARCHAPAGLKGRYIGELDQSHFTCYA). The region spanning 366–454 (PVIVEPPTDL…GNTTASATLN (89 aa)) is the Ig-like C2-type domain. Cys387 and Cys438 are disulfide-bonded. Residues 496–552 (TQPGEEAQQPRGTEKEPPGPTTDGAWGGGRPDAAAPASASTTAPAPRSSRPTEKAFT) form a disordered region. Residues 528–544 (AAAPASASTTAPAPRSS) show a composition bias toward low complexity. A helical membrane pass occupies residues 575 to 595 (IIIGCFVAITFMAAVMLVAFY). Ser689 bears the Phosphoserine mark.

Interacts with PTPRF. Interacts with DLG4. N-glycosylated. O-glycosylated; contains sialic acid.

The protein resides in the membrane. The protein localises to the presynaptic cell membrane. In terms of biological role, synaptic adhesion protein. Regulates the formation of excitatory synapses. The trans-synaptic adhesion between LRRC4B and PTPRF regulates the formation of excitatory synapses in a bidirectional manner. The sequence is that of Leucine-rich repeat-containing protein 4B (Lrrc4b) from Mus musculus (Mouse).